The chain runs to 444 residues: Phosphoglucosamine mutase (444 aa).

Serine 104 serves as the catalytic Phosphoserine intermediate. The Mg(2+) site is built by serine 104, aspartate 243, aspartate 245, and aspartate 247. Serine 104 carries the phosphoserine modification.

It belongs to the phosphohexose mutase family. Mg(2+) is required as a cofactor. Post-translationally, activated by phosphorylation.

It catalyses the reaction alpha-D-glucosamine 1-phosphate = D-glucosamine 6-phosphate. Functionally, catalyzes the conversion of glucosamine-6-phosphate to glucosamine-1-phosphate. This chain is Phosphoglucosamine mutase, found in Neisseria meningitidis serogroup A / serotype 4A (strain DSM 15465 / Z2491).